The sequence spans 382 residues: G2/mitotic-specific cyclin-B2 (382 aa).

Residues 1–12 (MSSVEAVTQQQL) are compositionally biased toward polar residues. The tract at residues 1–78 (MSSVEAVTQQ…HTSAGDPAPI (78 aa)) is disordered. Residues 38–47 (NRNAAAAANR) are compositionally biased toward low complexity.

Belongs to the cyclin family. Cyclin AB subfamily. As to quaternary structure, interacts with the CDK1 protein kinase to form a serine/threonine kinase holoenzyme complex also known as maturation promoting factor (MPF). The cyclin subunit imparts substrate specificity to the complex.

Its function is as follows. Essential for the control of the cell cycle at the G2/M (mitosis) transition. The chain is G2/mitotic-specific cyclin-B2 (ccnb2) from Oryzias javanicus (Javanese ricefish).